The sequence spans 277 residues: Large ribosomal subunit protein uL2 (277 aa).

The segment at 219-277 (RPQTRGSAMNPVDHPHGGGEGKKNSGRHPVTPWGKPTKGAKTRRKKASDKLIISRRKGK) is disordered. Residues 231-241 (DHPHGGGEGKK) are compositionally biased toward basic and acidic residues. Positions 256–277 (KGAKTRRKKASDKLIISRRKGK) are enriched in basic residues.

The protein belongs to the universal ribosomal protein uL2 family. In terms of assembly, part of the 50S ribosomal subunit. Forms a bridge to the 30S subunit in the 70S ribosome.

One of the primary rRNA binding proteins. Required for association of the 30S and 50S subunits to form the 70S ribosome, for tRNA binding and peptide bond formation. It has been suggested to have peptidyltransferase activity; this is somewhat controversial. Makes several contacts with the 16S rRNA in the 70S ribosome. In Campylobacter curvus (strain 525.92), this protein is Large ribosomal subunit protein uL2.